Reading from the N-terminus, the 233-residue chain is Large ribosomal subunit protein uL1 (233 aa).

This sequence belongs to the universal ribosomal protein uL1 family. Part of the 50S ribosomal subunit.

Functionally, binds directly to 23S rRNA. The L1 stalk is quite mobile in the ribosome, and is involved in E site tRNA release. Protein L1 is also a translational repressor protein, it controls the translation of the L11 operon by binding to its mRNA. The polypeptide is Large ribosomal subunit protein uL1 (Shewanella piezotolerans (strain WP3 / JCM 13877)).